We begin with the raw amino-acid sequence, 1429 residues long: Nitric oxide synthase 1 (1429 aa).

The tract at residues 1–200 (MEENTFGVQQ…LQDIGEHDEL (200 aa)) is interaction with NOSIP. The 83-residue stretch at 17–99 (SVRLFKRKVG…ETHVVLILRG (83 aa)) folds into the PDZ domain. Disordered regions lie at residues 152–174 (VTGL…SVSQ), 214–255 (GSKA…DNDR), and 271–298 (NNPY…SRCP). Residues 160–174 (QHAQGHGQGAGSVSQ) are compositionally biased toward low complexity. The tract at residues 163–240 (QGHGQGAGSV…TGIQVDRDLD (78 aa)) is interaction with DYNLL1/PIN. Over residues 226–243 (AEMKDTGIQVDRDLDGKS) the composition is skewed to basic and acidic residues. At S280 the chain carries Phosphoserine. Residues 280–294 (SPTSGKQSPTKNGSP) are compositionally biased toward polar residues. (6R)-L-erythro-5,6,7,8-tetrahydrobiopterin is bound at residue S334. C415 lines the heme b pocket. L-arginine is bound by residues Q478, W587, Y588, and E592. (6R)-L-erythro-5,6,7,8-tetrahydrobiopterin-binding residues include V677, W678, and F691. A heme b-binding site is contributed by Y706. The calmodulin-binding stretch occupies residues 725 to 745 (KRRAIGFKKLAEAVKFSAKLM). Residues 755 to 935 (ATILYATETG…AFRTWAKKVF (181 aa)) form the Flavodoxin-like domain. 8 residues coordinate FMN: T761, E762, T763, K765, S766, S807, T808, and G812. 3 positions are modified to phosphoserine: S847, S857, and S858. Residues S886, H891, C893, E919, and Q923 each contribute to the FMN site. Residues 990 to 1237 (KRVSAARLLS…VRGAPSFHLP (248 aa)) form the FAD-binding FR-type domain. Residue R1010 coordinates NADP(+). Positions 1032, 1173, 1174, 1175, 1176, 1191, and 1193 each coordinate FAD. NADP(+) is bound at residue S1196. Residues Y1197, V1210, C1211, and S1212 each contribute to the FAD site. Positions 1251, 1284, 1313, 1314, 1320, 1322, 1324, 1357, 1398, and 1400 each coordinate NADP(+).

This sequence belongs to the NOS family. Homodimer. Interacts with DLG4 (via N-terminal tandem pair of PDZ domains); the interaction possibly being prevented by the association between NOS1 and CAPON. Forms a ternary complex with CAPON and RASD1. Forms a ternary complex with CAPON and SYN1. Interacts with ZDHHC23. Interacts with NOSIP; which may impair its synaptic location. Interacts with HTR4. Interacts with SLC6A4. Interacts with VAC14. Forms a complex with ASL, ASS1 and SLC7A1; the complex regulates cell-autonomous L-arginine synthesis and citrulline recycling while channeling extracellular L-arginine to nitric oxide synthesis pathway. Interacts with DMD; localizes NOS1 to sarcolemma in muscle cells. Interacts with DYNLL1; inhibits the nitric oxide synthase activity. Heme b serves as cofactor. The cofactor is FAD. FMN is required as a cofactor. It depends on (6R)-L-erythro-5,6,7,8-tetrahydrobiopterin as a cofactor. Ubiquitinated; mediated by STUB1/CHIP in the presence of Hsp70 and Hsp40 (in vitro). Isoform N-NOS-1 is expressed in brain and colorectum. Found in the Auerbach's plexus of the enteric nervous system. Isoform PNNOS is expressed in the penis, urethra, prostate, and skeletal muscle, and coexists with the cerebellar nnos in the pelvic plexus, bladder and liver, and is detectable in the cerebellum.

The protein localises to the cell membrane. Its subcellular location is the sarcolemma. It localises to the cell projection. The protein resides in the dendritic spine. It catalyses the reaction 2 L-arginine + 3 NADPH + 4 O2 + H(+) = 2 L-citrulline + 2 nitric oxide + 3 NADP(+) + 4 H2O. Its activity is regulated as follows. Stimulated by calcium/calmodulin. Inhibited by DYNLL1 that prevents the dimerization of the protein. Inhibited by NOSIP. Its function is as follows. Produces nitric oxide (NO) which is a messenger molecule with diverse functions throughout the body. In the brain and peripheral nervous system, NO displays many properties of a neurotransmitter. Inhibitory transmitter for non-adrenergic and non-cholinergic nerves in the colorectum. Probably has nitrosylase activity and mediates cysteine S-nitrosylation of cytoplasmic target proteins such SRR. Inhibitory transmitter for non-adrenergic and non-cholinergic nerves in the colorectum. This Rattus norvegicus (Rat) protein is Nitric oxide synthase 1.